We begin with the raw amino-acid sequence, 189 residues long: Small ribosomal subunit protein uS5 (189 aa).

The S5 DRBM domain occupies 22-85; the sequence is FVDKLVAINR…ESAKRDLIFV (64 aa).

It belongs to the universal ribosomal protein uS5 family. As to quaternary structure, part of the 30S ribosomal subunit. Contacts proteins S4 and S8.

In terms of biological role, with S4 and S12 plays an important role in translational accuracy. Functionally, located at the back of the 30S subunit body where it stabilizes the conformation of the head with respect to the body. The polypeptide is Small ribosomal subunit protein uS5 (Agrobacterium fabrum (strain C58 / ATCC 33970) (Agrobacterium tumefaciens (strain C58))).